Consider the following 89-residue polypeptide: UPF0237 protein CPE1496 (89 aa).

An ACT domain is found at 4–84 (VITVVGKDKV…ISVQHEDIFN (81 aa)).

The protein belongs to the UPF0237 family.

This chain is UPF0237 protein CPE1496, found in Clostridium perfringens (strain 13 / Type A).